The primary structure comprises 77 residues: Conotoxin King-Kong 1 (77 aa).

An N-terminal signal peptide occupies residues 1–22 (MKLTCMMIVAVLFLTAWTFATA). Positions 23 to 49 (DDSSNGLENLFSKAHHEMKNPEASKLN) are excised as a propeptide. 3 cysteine pairs are disulfide-bonded: Cys52-Cys67, Cys59-Cys71, and Cys66-Cys76. Position 61 is a methionine sulfoxide; partial (Met61).

It belongs to the conotoxin O1 superfamily. In terms of tissue distribution, expressed by the venom duct.

The protein resides in the secreted. The chain is Conotoxin King-Kong 1 from Conus textile (Cloth-of-gold cone).